A 144-amino-acid chain; its full sequence is Monooxygenase ptaG (144 aa).

The protein belongs to the avfA family.

Its pathway is secondary metabolite biosynthesis. In terms of biological role, monooxygenase; part of the gene cluster that mediates the biosynthesis of pestheic acid, a diphenyl ether which is a biosynthetic precursor of the unique chloropupukeananes. The biosynthesis initiates from condensation of acetate and malonate units catalyzed by the non-reducing PKS ptaA. As the ptaA protein is TE/CLC domain-deficient, hydrolysis and Claisen cyclization of the polyketide could be catalyzed by ptaB containing a beta-lactamase domain. The ptaB protein might hydrolyze the thioester bond between the ACP of ptaA and the intermediate to release atrochrysone carboxylic acid, which is spontaneously dehydrated to form endocrocin anthrone. Endocrocin anthrone is then converted to endocrocin, catalyzed by the anthrone oxygenase ptaC. Spontaneous decarboxylation of endocrocin occurs to generate emodin. An O-methyltransferase (ptaH or ptaI) could methylate emodin to form physcion. PtaJ could then catalyze the oxidative cleavage of physcion, and rotation of the intermediate could then afford desmethylisosulochrin. PtaF, a putative NADH-dependent oxidoreductase, might also participate in the oxidative cleavage step. Desmethylisosulochrin is then transformed by another O-methyltransferase (ptaH or ptaI) to form isosulochrin. Chlorination of isosulochrin by ptaM in the cyclohexadienone B ring then produces chloroisosulochrin. PtaE is responsible for the oxidative coupling reactions of both benzophenones isosulochrin and chloroisosulochrin to RES-1214-1 and pestheic acid respectively, regardless of chlorination. This chain is Monooxygenase ptaG, found in Pestalotiopsis fici (strain W106-1 / CGMCC3.15140).